The following is a 401-amino-acid chain: Nodal homolog 3-B (401 aa).

An N-terminal signal peptide occupies residues 1–18 (MAFLSLFLCLVFSSPLMA). Positions 19 to 274 (MPPALQGRKA…KVNGFRRLRR (256 aa)) are excised as a propeptide. Residues Asn-168, Asn-337, and Asn-344 are each glycosylated (N-linked (GlcNAc...) asparagine). 2 cysteine pairs are disulfide-bonded: Cys-299/Cys-365 and Cys-328/Cys-396.

The protein belongs to the TGF-beta family. As to quaternary structure, monomer. The propeptide region interacts with bmp4 in a non-covalent manner. As to expression, expressed in the dorsal marginal region of late blastula, becoming restricted to the Spemann organizer at the early gastrula stage.

It is found in the secreted. In terms of biological role, exhibits mesoderm-dorsalizing activity and neural-inducing activity, but lacks mesoderm-inducing activity. Regulates the expression of specific mesodermal and neural genes. Induces convergent extension movements at the embryonic midline by activating the fgf signaling pathway to induce t/bra expression in the organizer region. Acts with wnt11 to induce Spemann organizer cells and induce axis formation. The unprocessed protein antagonizes bmp-signaling. This is Nodal homolog 3-B from Xenopus tropicalis (Western clawed frog).